The sequence spans 250 residues: Large ribosomal subunit protein uL29m (250 aa).

Lysine 144 is subject to N6-acetyllysine.

The protein belongs to the universal ribosomal protein uL29 family. As to quaternary structure, component of the mitochondrial large ribosomal subunit (mt-LSU). Mature mammalian 55S mitochondrial ribosomes consist of a small (28S) and a large (39S) subunit. The 28S small subunit contains a 12S ribosomal RNA (12S mt-rRNA) and 30 different proteins. The 39S large subunit contains a 16S rRNA (16S mt-rRNA), a copy of mitochondrial valine transfer RNA (mt-tRNA(Val)), which plays an integral structural role, and 52 different proteins.

The protein localises to the mitochondrion. In Homo sapiens (Human), this protein is Large ribosomal subunit protein uL29m (MRPL47).